A 445-amino-acid polypeptide reads, in one-letter code: N-succinylarginine dihydrolase (445 aa).

Substrate is bound by residues 19–28 (AGLSFGNVAS), Asn-110, and 137–138 (HR). Glu-174 is a catalytic residue. Arg-214 provides a ligand contact to substrate. His-250 is a catalytic residue. Substrate-binding residues include Asp-252 and Asn-363. Cys-369 acts as the Nucleophile in catalysis.

Belongs to the succinylarginine dihydrolase family. As to quaternary structure, homodimer.

It carries out the reaction N(2)-succinyl-L-arginine + 2 H2O + 2 H(+) = N(2)-succinyl-L-ornithine + 2 NH4(+) + CO2. Its pathway is amino-acid degradation; L-arginine degradation via AST pathway; L-glutamate and succinate from L-arginine: step 2/5. Functionally, catalyzes the hydrolysis of N(2)-succinylarginine into N(2)-succinylornithine, ammonia and CO(2). The protein is N-succinylarginine dihydrolase of Shewanella halifaxensis (strain HAW-EB4).